The sequence spans 399 residues: Bombesin receptor subtype-3 (399 aa).

At 1–41 the chain is on the extracellular side; the sequence is MSQKQPQSPNQTLISITNDTESSSSVVSNDTTNKGWTGDNS. N-linked (GlcNAc...) asparagine glycans are attached at residues N10 and N18. A helical transmembrane segment spans residues 42–63; it reads PGIEALCAIYITYAVIISVGIL. Topologically, residues 64–82 are cytoplasmic; sequence GNAILIKVFFKTKSMQTVP. Residues 83–103 form a helical membrane-spanning segment; sequence NIFITSLALGDLLLLLTCVPV. Residues 104 to 121 lie on the Extracellular side of the membrane; sequence DATHYLAEGWLFGRIGCK. An intrachain disulfide couples C120 to C203. Residues 122–143 form a helical membrane-spanning segment; that stretch reads VLSFIRLTSVGVSVFTLTILSA. Over 144–163 the chain is Cytoplasmic; the sequence is DRYKAVVKPLERQPSNAILK. Residues 164–184 traverse the membrane as a helical segment; it reads TCAKAGCIWIMSMIFALPEAI. Residues 185 to 220 are Extracellular-facing; the sequence is FSNVHTLRDPNKNMTSEWCAFYPVSEKLLQEIHALL. Residues 221-241 traverse the membrane as a helical segment; the sequence is SFLVFYIIPLSIISVYYSLIA. The Cytoplasmic segment spans residues 242 to 272; that stretch reads RTLYKSTLNIPTEEQSHARKQVESRKRIAKT. A helical membrane pass occupies residues 273-293; sequence VLVLVALFALCWLPNHLLNLY. Residues 294–313 are Extracellular-facing; sequence HSFTHKAYEDSSAIHFIVTI. Residues 314–333 traverse the membrane as a helical segment; it reads FSRVLAFSNSCVNPFALYWL. The Cytoplasmic portion of the chain corresponds to 334–399; the sequence is SKTFQKQFKA…RPMKKEENRV (66 aa). C347 is lipidated: S-palmitoyl cysteine.

Belongs to the G-protein coupled receptor 1 family. As to quaternary structure, interacts with C6orf89. As to expression, mainly in uteri of pregnant animals.

It is found in the cell membrane. Functionally, role in sperm cell division, maturation, or function. The relative order of ligand affinity is GRP = neuromedin-C &gt;&gt; neuromedin-B. This receptor mediates its action by association with G proteins that activate a phosphatidylinositol-calcium second messenger system. This Cavia porcellus (Guinea pig) protein is Bombesin receptor subtype-3 (BRS3).